The sequence spans 636 residues: Zinc finger protein 90 (636 aa).

Residues 14–85 enclose the KRAB domain; that stretch reads VTFKDVAVNF…EKEIQRPFCP (72 aa). C2H2-type zinc fingers lie at residues 208–230, 250–272, 278–300, 306–328, 334–356, 362–384, and 390–412; these read YKCDKCRKSFIHRSSLNKHEKIH, HECADCGKTFLWRTQLTEHQRIH, FECNVCGKAFRHSSSLGQHENAH, YQCSLCGKAFQRSSSLVQHQRIH, YRCNLCGRSFRHSTSLTQHEVTH, FQCKECGKAFSRCSSLVQHERTH, and FECSICGRAFGQSPSLYKHMRIH. Residues 227-247 form a disordered region; it reads EKIHKGDPYSNGTDQGAQSGR. Lys444 participates in a covalent cross-link: Glycyl lysine isopeptide (Lys-Gly) (interchain with G-Cter in SUMO2). 6 C2H2-type zinc fingers span residues 446–468, 494–516, 522–544, 550–572, 578–600, and 606–628; these read YHCNDCGKDFGHITDFSEHQRLH, YQCNVCGKAFKRSTSFIEHHRIH, YECNECGEAFSRLSSLTQHERTH, YECIDCGKAFSQSSSLIQHERTH, YECNECGRAFRKKTNLHDHQRTH, and YACKECGRNFSRSSALTKHHRVH.

Belongs to the krueppel C2H2-type zinc-finger protein family. Interacts (via N- and C-termini) with REST (via zinc-finger DNA-binding domain); the interaction inhibits REST repressor activity. In terms of tissue distribution, brain, spleen, thymus, and testis. Expressed in heart.

It localises to the nucleus. Its function is as follows. Inhibits the transcriptional repressor activity of REST by inhibiting its binding to DNA, thereby derepressing transcription of REST target genes. The protein is Zinc finger protein 90 (Zfp90) of Mus musculus (Mouse).